The primary structure comprises 158 residues: Small ribosomal subunit protein uS17 (158 aa).

At Ala2 the chain carries N-acetylalanine. Arg22 is modified (citrulline). An N6-acetyllysine mark is found at Lys38, Lys45, and Lys58. Cys60 carries the S-palmitoyl cysteine lipid modification. Ser67 carries the post-translational modification Phosphoserine. The residue at position 69 (Arg69) is an Omega-N-methylarginine. A Phosphoserine modification is found at Ser110.

Belongs to the universal ribosomal protein uS17 family. In terms of assembly, component of the small ribosomal subunit. Part of the small subunit (SSU) processome, composed of more than 70 proteins and the RNA chaperone small nucleolar RNA (snoRNA) U3. Post-translationally, citrullinated by PADI4.

It localises to the cytoplasm. Its subcellular location is the nucleus. The protein localises to the nucleolus. Its function is as follows. Component of the small ribosomal subunit. The ribosome is a large ribonucleoprotein complex responsible for the synthesis of proteins in the cell. Part of the small subunit (SSU) processome, first precursor of the small eukaryotic ribosomal subunit. During the assembly of the SSU processome in the nucleolus, many ribosome biogenesis factors, an RNA chaperone and ribosomal proteins associate with the nascent pre-rRNA and work in concert to generate RNA folding, modifications, rearrangements and cleavage as well as targeted degradation of pre-ribosomal RNA by the RNA exosome. This Canis lupus familiaris (Dog) protein is Small ribosomal subunit protein uS17 (RPS11).